The primary structure comprises 545 residues: Glucans biosynthesis protein G (545 aa).

Positions 1–34 (MVSLLRCQSFKPSSSLICSLALSAAFALSSSAFA) are cleaved as a signal peptide. Positions 38-60 (KPAENKPATPVVSPPKATAQPAN) are disordered.

Belongs to the OpgD/OpgG family.

Its subcellular location is the periplasm. It functions in the pathway glycan metabolism; osmoregulated periplasmic glucan (OPG) biosynthesis. Functionally, involved in the biosynthesis of osmoregulated periplasmic glucans (OPGs). The sequence is that of Glucans biosynthesis protein G from Shewanella sp. (strain ANA-3).